Consider the following 414-residue polypeptide: Isocitrate dehydrogenase [NADP] cytoplasmic (414 aa).

The residue at position 2 (serine 2) is an N-acetylserine. Position 42 is a phosphotyrosine (tyrosine 42). NADP(+) is bound at residue 75–77 (TIT). A substrate-binding site is contributed by threonine 77. Lysine 81 carries the N6-acetyllysine modification. NADP(+) is bound at residue arginine 82. Substrate contacts are provided by residues 94–100 (SPNGTIR) and arginine 109. The residue at position 126 (lysine 126) is an N6-succinyllysine. The substrate site is built by arginine 132 and lysine 212. N6-acetyllysine occurs at positions 224, 233, and 243. A Mn(2+)-binding site is contributed by aspartate 252. Lysine 260 lines the NADP(+) pocket. Mn(2+) contacts are provided by aspartate 275 and aspartate 279. Residue 310-315 (GTVTRH) coordinates NADP(+). Lysine 321 is modified (N6-acetyllysine). Asparagine 328 contributes to the NADP(+) binding site. Serine 389 is modified (phosphoserine). Lysine 400 carries the post-translational modification N6-succinyllysine.

The protein belongs to the isocitrate and isopropylmalate dehydrogenases family. As to quaternary structure, homodimer. It depends on Mg(2+) as a cofactor. Requires Mn(2+) as cofactor. In terms of processing, acetylation at Lys-374 dramatically reduces catalytic activity.

It localises to the cytoplasm. Its subcellular location is the cytosol. The protein localises to the peroxisome. The catalysed reaction is D-threo-isocitrate + NADP(+) = 2-oxoglutarate + CO2 + NADPH. Its function is as follows. Catalyzes the NADP(+)-dependent oxidative decarboxylation of isocitrate (D-threo-isocitrate) to 2-ketoglutarate (2-oxoglutarate), which is required by other enzymes such as the phytanoyl-CoA dioxygenase. Plays a critical role in the generation of NADPH, an important cofactor in many biosynthesis pathways. May act as a corneal epithelial crystallin and may be involved in maintaining corneal epithelial transparency. The chain is Isocitrate dehydrogenase [NADP] cytoplasmic (IDH1) from Homo sapiens (Human).